Reading from the N-terminus, the 235-residue chain is Sperm annulus positionning complex subunit Chibby3 (235 aa).

Residues 1 to 41 (MADSKMKWGQAWDSSLGTATTSSSSATGSPSPFQNIRVPDT) are disordered. Residues 14–32 (SSLGTATTSSSSATGSPSP) show a composition bias toward low complexity. The leucine-zipper; mediates homodimerization stretch occupies residues 167–181 (LLEENNYLKLQQELL).

Belongs to the chibby family. In terms of assembly, homodimer. Interacts with CIBAR1 (via BAR-like domain); both proteins form a ninefold symmetric structure at the flagellar base; are recruited to the annulus in a mutually dependent manner and regulate annulus positionning. Testis-specific.

It is found in the cell projection. The protein localises to the cilium. It localises to the flagellum. In terms of biological role, plays a key role in the correct positioning of the annulus, a septin-based ring strucure in the sperm flagellum, serving both as a physical barrier and a membrane diffusion barrier that separates the midpiece (MP) from the principal piece (PP). This positioning is essential for proper sperm motility and function. Interacts with CIBAR1 to form a complex which localizes to the curved membrane region of the flagellar pocket. By doing so, may provide stability and rigidity to the periannular membrane to prevent membrane deformation. This function is crucial for halting annulus migration at the proximal end of the fibrous sheath-containing PP. The polypeptide is Sperm annulus positionning complex subunit Chibby3 (Cby3) (Mus musculus (Mouse)).